We begin with the raw amino-acid sequence, 487 residues long: 1-aminocyclopropane-1-carboxylate synthase 1 (487 aa).

Lys286 bears the N6-(pyridoxal phosphate)lysine mark.

This sequence belongs to the class-I pyridoxal-phosphate-dependent aminotransferase family. Homodimer. Pyridoxal 5'-phosphate is required as a cofactor.

The catalysed reaction is S-adenosyl-L-methionine = 1-aminocyclopropane-1-carboxylate + S-methyl-5'-thioadenosine + H(+). The protein operates within alkene biosynthesis; ethylene biosynthesis via S-adenosyl-L-methionine; ethylene from S-adenosyl-L-methionine: step 1/2. Its function is as follows. Catalyzes the formation of 1-aminocyclopropane-1-carboxylate, a direct precursor of ethylene in higher plants. The protein is 1-aminocyclopropane-1-carboxylate synthase 1 (ACC1) of Oryza sativa subsp. indica (Rice).